Consider the following 1693-residue polypeptide: Serine protease filzig (1693 aa).

Residues 1–47 (MFKWVTPASTATLSRCTLPATTAATTTTTAMAATRTATTTTRTTRPQ) are Cytoplasmic-facing. The chain crosses the membrane as a helical; Signal-anchor for type II membrane protein span at residues 48–68 (LLSIALTSLIIIVASFVPTTS). Over 69–1693 (GFRSIETNGG…PWLRSITGVK (1625 aa)) the chain is Extracellular. Disordered stretches follow at residues 170–198 (QQSAAQSSFESYGEQQQSLSEEQVAQQPS), 212–321 (QQLD…NDDF), 352–465 (GLQD…THPG), and 477–524 (STGY…TTVS). Composition is skewed to polar residues over residues 178–198 (FESYGEQQQSLSEEQVAQQPS) and 212–222 (QQLDSSSSISP). Low complexity-rich tracts occupy residues 230–241 (EPQQQEYQSESE) and 252–268 (TSSSSTEATQSQSSSAS). Positions 274 to 294 (EPSQPADASNDQTTQKINKQP) are enriched in polar residues. Low complexity-rich tracts occupy residues 358–404 (SSES…PTQK), 422–431 (QQKPQQVAKP), and 488–501 (EPPKQQQQQQPAEQ). Residues 502 to 524 (SYISSSTSAKRPTTGHNSPTTVS) show a composition bias toward polar residues. N541 and N582 each carry an N-linked (GlcNAc...) asparagine glycan. Disordered regions lie at residues 615–635 (QDASAAVSQSAEMPTARPGYG), 752–1007 (HYNP…PPAT), and 1057–1090 (YAHRPTSSGSYGHKKPGFVQINGTPKPPRPTVLI). The span at 771–799 (SVSSHTTKVQEQMDETSNGYQQSETTSGY) shows a compositional bias: polar residues. Basic residues predominate over residues 836–847 (PRPKPSTKRPAV). 2 stretches are compositionally biased toward polar residues: residues 951–962 (QYDQPSAPSASY) and 989–1000 (KPISTSYVTGPS). N-linked (GlcNAc...) asparagine glycosylation is found at N1215 and N1272. Low complexity-rich tracts occupy residues 1297–1307 (PVRTATTTRPK), 1331–1353 (TTTRKPATRRTTVAAKVTTTTRR), and 1362–1376 (RVSSTVKTTTVSSAR). Residues 1297-1435 (PVRTATTTRP…TPNLAFHSPS (139 aa)) are disordered. Acidic residues predominate over residues 1380 to 1391 (DEIVDEEDEEDV). Positions 1449 to 1691 (IVGGKGSTFG…YKPWLRSITG (243 aa)) constitute a Peptidase S1 domain. A disulfide bridge connects residues C1480 and C1496. Active-site charge relay system residues include H1495 and D1544. Disulfide bonds link C1608–C1627 and C1638–C1667. The Charge relay system role is filled by S1642.

It belongs to the peptidase S1 family.

The protein localises to the cell membrane. Its function is as follows. Probable endopeptidase. In tracheal terminal cells, acts downstream of ich to regulate seamless tube growth and/or maintenance probably by processing lumenal matrix proteins. This Drosophila melanogaster (Fruit fly) protein is Serine protease filzig.